The chain runs to 3801 residues: Lysosomal-trafficking regulator (3801 aa).

Residues 148 to 173 (KITHRYSVRDARKTQLSTSDSEANSD) form a disordered region. Position 164 is a phosphoserine (serine 164). At threonine 165 the chain carries Phosphothreonine. The residue at position 166 (serine 166) is a Phosphoserine. A WD 1 repeat occupies 662–700 (ELSSSLSSPSYRFQGILPSSGSEDLLWKWDALKAYQNFV). Residues 1181–1190 (AMTEKSHQSA) show a composition bias toward basic and acidic residues. Disordered regions lie at residues 1181-1203 (AMTE…FSEE) and 1221-1256 (YEAD…SPND). A compositionally biased stretch (acidic residues) spans 1221-1238 (YEADSESNPEDGETQDDG). Residues 1246–1256 (EGFSASSSPND) show a composition bias toward polar residues. Phosphoserine is present on residues serine 1509 and serine 1510. One copy of the WD 2 repeat lies at 1582–1626 (SQENIFLPSKWQHLVLTYLQQPQGKRRIHGKISIWVSGQRKPDVT). Serine 2105, serine 2124, serine 2213, serine 2217, and serine 2264 each carry phosphoserine. Positions 2205-2215 (KQLGAEPRSED) are enriched in basic and acidic residues. Positions 2205–2224 (KQLGAEPRSEDDSPGDESCP) are disordered. The BEACH-type PH domain occupies 3009-3115 (AASESIRVNR…VRDDVYHNIL (107 aa)). The region spanning 3120–3422 (PNLLEYGNIT…QLFHMAHVSR (303 aa)) is the BEACH domain. 5 WD repeats span residues 3563 to 3602 (SQQY…STPS), 3614 to 3653 (GHTE…YVQS), 3656 to 3699 (GHKS…VGHV), 3700 to 3744 (HCRE…PVRE), and 3749 to 3788 (KSNK…RLKQ).

In terms of assembly, interacts with CPAP, LIP8 and ZNF521. In terms of tissue distribution, abundantly expressed in adult and fetal thymus, peripheral blood leukocytes, bone marrow and several regions of the adult brain.

It is found in the cytoplasm. In terms of biological role, adapter protein that regulates and/or fission of intracellular vesicles such as lysosomes. Might regulate trafficking of effectors involved in exocytosis. In cytotoxic T-cells and natural killer (NK) cells, has role in the regulation of size, number and exocytosis of lytic granules. In macrophages and dendritic cells, regulates phagosome maturation by controlling the conversion of early phagosomal compartments into late phagosomes. In macrophages and dendritic cells, specifically involved in TLR3- and TLR4-induced production of pro-inflammatory cytokines by regulating the endosomal TLR3- TICAM1/TRIF and TLR4- TICAM1/TRIF signaling pathways. This Homo sapiens (Human) protein is Lysosomal-trafficking regulator (LYST).